Here is a 287-residue protein sequence, read N- to C-terminus: Small ribosomal subunit protein uS2 (287 aa).

The interval 233–287 (HKAPQDDIEPMAEWEKQLLQSGDSSGETRPISGTDRPLDGDLSKGPAPQDEELSD) is disordered. Residues 250 to 259 (LLQSGDSSGE) show a composition bias toward polar residues.

Belongs to the universal ribosomal protein uS2 family.

In Tropheryma whipplei (strain TW08/27) (Whipple's bacillus), this protein is Small ribosomal subunit protein uS2.